The following is a 346-amino-acid chain: Histidinol-phosphate aminotransferase (346 aa).

Lysine 209 is modified (N6-(pyridoxal phosphate)lysine).

Belongs to the class-II pyridoxal-phosphate-dependent aminotransferase family. Histidinol-phosphate aminotransferase subfamily. As to quaternary structure, homodimer. Requires pyridoxal 5'-phosphate as cofactor.

It catalyses the reaction L-histidinol phosphate + 2-oxoglutarate = 3-(imidazol-4-yl)-2-oxopropyl phosphate + L-glutamate. The protein operates within amino-acid biosynthesis; L-histidine biosynthesis; L-histidine from 5-phospho-alpha-D-ribose 1-diphosphate: step 7/9. The polypeptide is Histidinol-phosphate aminotransferase (Vibrio campbellii (strain ATCC BAA-1116)).